The chain runs to 107 residues: Putative protein RFPL3S (107 aa).

As to expression, strongly expressed in the testis and weakly in brain, placenta and pancreas.

This is Putative protein RFPL3S (RFPL3S) from Homo sapiens (Human).